Here is a 464-residue protein sequence, read N- to C-terminus: NADH-ubiquinone oxidoreductase chain 4 (464 aa).

13 helical membrane-spanning segments follow: residues 1–21, 63–83, 98–118, 119–139, 152–172, 197–217, 227–247, 261–281, 288–308, 314–334, 355–375, 389–409, and 443–463; these read MMIT…VIPQ, SISA…LIAS, FIII…ALEL, LLFY…ITRW, FMFY…AIYI, IWWA…GFHL, PVAG…YGLI, LSLA…IICV, ALIA…IFSS, NGAL…FSLA, ILPL…GLPP, LIAW…FGAI, and LHTL…ITWL.

This sequence belongs to the complex I subunit 4 family.

The protein resides in the mitochondrion membrane. It catalyses the reaction a ubiquinone + NADH + 5 H(+)(in) = a ubiquinol + NAD(+) + 4 H(+)(out). Its function is as follows. Core subunit of the mitochondrial membrane respiratory chain NADH dehydrogenase (Complex I) that is believed to belong to the minimal assembly required for catalysis. Complex I functions in the transfer of electrons from NADH to the respiratory chain. The immediate electron acceptor for the enzyme is believed to be ubiquinone. The sequence is that of NADH-ubiquinone oxidoreductase chain 4 (ND4) from Paracentrotus lividus (Common sea urchin).